Consider the following 127-residue polypeptide: Aspartate 1-decarboxylase (127 aa).

The active-site Schiff-base intermediate with substrate; via pyruvic acid is the Ser-25. Ser-25 is subject to Pyruvic acid (Ser). Thr-57 is a binding site for substrate. The active-site Proton donor is the Tyr-58. A substrate-binding site is contributed by 73 to 75 (GAA).

Belongs to the PanD family. As to quaternary structure, heterooctamer of four alpha and four beta subunits. Pyruvate is required as a cofactor. Post-translationally, is synthesized initially as an inactive proenzyme, which is activated by self-cleavage at a specific serine bond to produce a beta-subunit with a hydroxyl group at its C-terminus and an alpha-subunit with a pyruvoyl group at its N-terminus.

The protein resides in the cytoplasm. The enzyme catalyses L-aspartate + H(+) = beta-alanine + CO2. It participates in cofactor biosynthesis; (R)-pantothenate biosynthesis; beta-alanine from L-aspartate: step 1/1. Catalyzes the pyruvoyl-dependent decarboxylation of aspartate to produce beta-alanine. The sequence is that of Aspartate 1-decarboxylase from Exiguobacterium sibiricum (strain DSM 17290 / CCUG 55495 / CIP 109462 / JCM 13490 / 255-15).